Here is a 382-residue protein sequence, read N- to C-terminus: Nitric oxide reductase FlRd-NAD(+) reductase (382 aa).

Belongs to the FAD-dependent oxidoreductase family. The cofactor is FAD.

Its subcellular location is the cytoplasm. It carries out the reaction 2 reduced [nitric oxide reductase rubredoxin domain] + NAD(+) + H(+) = 2 oxidized [nitric oxide reductase rubredoxin domain] + NADH. It functions in the pathway nitrogen metabolism; nitric oxide reduction. Functionally, one of at least two accessory proteins for anaerobic nitric oxide (NO) reductase. Reduces the rubredoxin moiety of NO reductase. The sequence is that of Nitric oxide reductase FlRd-NAD(+) reductase from Vibrio vulnificus (strain CMCP6).